The following is a 428-amino-acid chain: Nucleoside diphosphate phosphatase ENTPD5 (428 aa).

An N-terminal signal peptide occupies residues 1 to 24 (MATSWGTVFFMLVVSCVCSAVSHR). Glutamate 172 (proton acceptor) is an active-site residue. The N-linked (GlcNAc...) asparagine glycan is linked to asparagine 232. Disulfide bonds link cysteine 272/cysteine 303 and cysteine 363/cysteine 377. Residue asparagine 368 is glycosylated (N-linked (GlcNAc...) asparagine).

Belongs to the GDA1/CD39 NTPase family. As to quaternary structure, monomer; active form. Homodimer; disulfide-linked. Homodimers are enzymatically inactive. Ca(2+) serves as cofactor. Requires Mg(2+) as cofactor. In terms of processing, N-glycosylated; high-mannose type. Glycosylation is not essential for enzymatic activity. In terms of tissue distribution, expressed in adult liver, kidney, prostate, testis and colon. Much weaker expression in other tissues.

It localises to the endoplasmic reticulum. The protein localises to the secreted. The enzyme catalyses a ribonucleoside 5'-diphosphate + H2O = a ribonucleoside 5'-phosphate + phosphate + H(+). It carries out the reaction GDP + H2O = GMP + phosphate + H(+). The catalysed reaction is UDP + H2O = UMP + phosphate + H(+). It catalyses the reaction IDP + H2O = IMP + phosphate + H(+). The enzyme catalyses CDP + H2O = CMP + phosphate + H(+). It carries out the reaction ADP + H2O = AMP + phosphate + H(+). Its pathway is protein modification; protein glycosylation. In terms of biological role, hydrolyzes nucleoside diphosphates with a preference for GDP, IDP and UDP compared to ADP and CDP. In the lumen of the endoplasmic reticulum, hydrolyzes UDP that acts as an end-product feedback inhibitor of the UDP-Glc:glycoprotein glucosyltransferases. UMP can be transported back by an UDP-sugar antiporter to the cytosol where it is consumed to regenerate UDP-glucose. Therefore, it positively regulates protein reglucosylation by clearing UDP from the ER lumen and by promoting the regeneration of UDP-glucose. Protein reglucosylation is essential to proper glycoprotein folding and quality control in the ER. In Homo sapiens (Human), this protein is Nucleoside diphosphate phosphatase ENTPD5.